A 512-amino-acid polypeptide reads, in one-letter code: GMP synthase [glutamine-hydrolyzing] (512 aa).

Residues 7–197 form the Glutamine amidotransferase type-1 domain; sequence TIIVLDFGSQ…VFGVCGCSEG (191 aa). The active-site Nucleophile is the Cys-84. Active-site residues include His-171 and Glu-173. Residues 198 to 387 form the GMPS ATP-PPase domain; sequence WNMENFIEVE…LGIPDEIVWR (190 aa). ATP is bound at residue 225 to 231; it reads SGGVDSS.

Homodimer.

The enzyme catalyses XMP + L-glutamine + ATP + H2O = GMP + L-glutamate + AMP + diphosphate + 2 H(+). It functions in the pathway purine metabolism; GMP biosynthesis; GMP from XMP (L-Gln route): step 1/1. Catalyzes the synthesis of GMP from XMP. This is GMP synthase [glutamine-hydrolyzing] from Bacillus anthracis.